The primary structure comprises 147 residues: Hemoglobin subunit beta-1 (147 aa).

An N-acetylvaline modification is found at Val-2. Positions 3–147 constitute a Globin domain; it reads HLTDAEKAAV…VASALAHKYH (145 aa). Lys-18 is modified (N6-succinyllysine). A phosphoserine mark is found at Ser-45, Ser-51, and Ser-53. Lys-60 carries the N6-succinyllysine modification. His-64 and His-93 together coordinate heme b. Arg-105 carries the asymmetric dimethylarginine modification. Thr-124 is subject to Phosphothreonine.

It belongs to the globin family. As to quaternary structure, heterotetramer of two alpha chains and two beta chains. In terms of tissue distribution, red blood cells.

Its function is as follows. Involved in oxygen transport from the lung to the various peripheral tissues. In Rattus norvegicus (Rat), this protein is Hemoglobin subunit beta-1 (Hbb).